A 1287-amino-acid chain; its full sequence is DNA-directed RNA polymerase subunit beta (1287 aa).

It belongs to the RNA polymerase beta chain family. The RNAP catalytic core consists of 2 alpha, 1 beta, 1 beta' and 1 omega subunit. When a sigma factor is associated with the core the holoenzyme is formed, which can initiate transcription.

It carries out the reaction RNA(n) + a ribonucleoside 5'-triphosphate = RNA(n+1) + diphosphate. Functionally, DNA-dependent RNA polymerase catalyzes the transcription of DNA into RNA using the four ribonucleoside triphosphates as substrates. The sequence is that of DNA-directed RNA polymerase subunit beta from Mycoplasma capricolum subsp. capricolum (strain California kid / ATCC 27343 / NCTC 10154).